A 422-amino-acid chain; its full sequence is MVMAALSLVAACWGRAAADESVQLPAAPGSSVRARETMVSVTMATSEWIQFFKEAGIPPGPAVNYAVMFVDNRIQKSMLLDLNKEIMNELGVTVVGDIIAILKHAKVVHRQDMCKAATESVPCSPSPLAGEIRRGTSAASRMITNSLNHDSPPSTPPRRPDTSTSKISVTVSNKMAAKSAKATAALARREEESLAVPAKRRRVTAEMEGKYVINMPKGTTPRTRKILEQQQAAKGLHRTSVFDRLGAETKADTTTGSKPTGVFSRLGATPETDEDLAWDSDNDSSSSVLQYAGVLKKLGRGPAKASPQPALTVKAKATSSATTAAAPTLRRLALSSRSGLERKPESLSKVSIIKRLGAAALVPEAQDSQVTSTKSKSSAEVKVTIKRTLVGPRGSSSSEGLGAQMDHAGTVSVFKRLGRRTF.

Ser124, Ser126, and Ser151 each carry phosphoserine. The interval 144-166 (TNSLNHDSPPSTPPRRPDTSTSK) is disordered. Residue Lys250 forms a Glycyl lysine isopeptide (Lys-Gly) (interchain with G-Cter in SUMO2) linkage. Disordered regions lie at residues 251–285 (ADTT…NDSS) and 299–324 (GRGP…ATTA). Over residues 271 to 282 (ETDEDLAWDSDN) the composition is skewed to acidic residues. Phosphoserine occurs at positions 280 and 306. The segment covering 310 to 324 (ALTVKAKATSSATTA) has biased composition (low complexity). Residue Ser351 is modified to Phosphoserine.

This is an uncharacterized protein from Homo sapiens (Human).